Consider the following 174-residue polypeptide: Shikimate kinase 2 (174 aa).

12–17 contacts ATP; it reads GCGKTT. Mg(2+)-binding residues include Thr-16 and Asp-32. Asp-34, Arg-58, and Gly-79 together coordinate substrate. The interval 112 to 126 is LID domain; the sequence is QAAPEEDLRPTLTGK. Arg-120 contributes to the ATP binding site. Arg-139 contributes to the substrate binding site.

It belongs to the shikimate kinase family. AroL subfamily. In terms of assembly, monomer. Mg(2+) is required as a cofactor.

It is found in the cytoplasm. The catalysed reaction is shikimate + ATP = 3-phosphoshikimate + ADP + H(+). The protein operates within metabolic intermediate biosynthesis; chorismate biosynthesis; chorismate from D-erythrose 4-phosphate and phosphoenolpyruvate: step 5/7. Catalyzes the specific phosphorylation of the 3-hydroxyl group of shikimic acid using ATP as a cosubstrate. The sequence is that of Shikimate kinase 2 from Escherichia coli O81 (strain ED1a).